The chain runs to 136 residues: Ribosome-binding factor A (136 aa).

It belongs to the RbfA family. Monomer. Binds 30S ribosomal subunits, but not 50S ribosomal subunits or 70S ribosomes.

It is found in the cytoplasm. One of several proteins that assist in the late maturation steps of the functional core of the 30S ribosomal subunit. Associates with free 30S ribosomal subunits (but not with 30S subunits that are part of 70S ribosomes or polysomes). Required for efficient processing of 16S rRNA. May interact with the 5'-terminal helix region of 16S rRNA. In Serratia proteamaculans (strain 568), this protein is Ribosome-binding factor A.